Consider the following 440-residue polypeptide: KH domain-containing protein 3 (440 aa).

The interval 1–39 (MASLKRFQTLVPLDHKQGTLFEIIGEPKLPKWFHVECLE) is involved in RNA binding. Residues 40-118 (DPKRLYVEPR…CRMKLMEIEA (79 aa)) enclose the KH; atypical domain. The tract at residues 132–201 (KAATQPAPVK…EVREAATEQA (70 aa)) is disordered. Residue serine 151 is modified to Phosphoserine; by ATR. Threonine 274 and threonine 286 each carry phosphothreonine. Residues 341–440 (VREAATQLSP…RDAWESFIIL (100 aa)) form a required for interaction with NUMA1 and regulation of apoptosis in response to DNA damage region. The residue at position 349 (serine 349) is a Phosphoserine.

Belongs to the KHDC1 family. As to quaternary structure, component of the subcortical maternal complex (SCMC), at least composed of NLRP5, KHDC3, OOEP, and TLE6. Within the complex, interacts with NLRP5, OOEP and TLE6. The SCMC may facilitate translocation of its components between the nuclear and cytoplasmic compartments. Forms a scaffold complex with OOEP/FLOPED, and interacts with BLM and TRIM25 at DNA replication forks. Interacts with PARP1; the interaction is increased following the formation of DNA double-strand breaks. Interacts (via C-terminus) with NUMA1. Post-translationally, phosphorylation at Ser-151 is required to promote stalled fork restart. In terms of tissue distribution, detected in ovary, but not in testis or somatic tissues. In the ovary, expressed in growing oocytes.

The protein resides in the cytoplasm. It is found in the cell cortex. It localises to the nucleus. The protein localises to the mitochondrion. Its subcellular location is the cytoskeleton. The protein resides in the microtubule organizing center. It is found in the centrosome. It localises to the chromosome. Component of the subcortical maternal complex (SCMC), a multiprotein complex that plays a key role in early embryonic development. The SCMC complex is a structural constituent of cytoplasmic lattices, which consist in fibrous structures found in the cytoplasm of oocytes and preimplantation embryos. They are required to store maternal proteins critical for embryonic development, such as proteins that control epigenetic reprogramming of the preimplantation embryo, and prevent their degradation or activation. KHDC3 ensures proper spindle assembly by regulating the localization of AURKA via RHOA signaling and of PLK1 via a RHOA-independent process. Required for the localization of MAD2L1 to kinetochores to enable spindle assembly checkpoint function. As part of the OOEP-KHDC3 scaffold, recruits BLM and TRIM25 to DNA replication forks, thereby promoting the ubiquitination of BLM by TRIM25, enhancing BLM retainment at replication forks and therefore promoting stalled replication fork restart. Regulates homologous recombination-mediated DNA repair via recruitment of RAD51 to sites of DNA double-strand breaks, and sustainment of PARP1 activity, which in turn modulates downstream ATM or ATR activation. Activation of ATM or ATR in response to DNA double-strand breaks may be cell-type specific. Its role in DNA double-strand break repair is independent of its role in restarting stalled replication forks. Promotes neural stem cell neurogenesis and neuronal differentiation in the hippocampus. May regulate normal development of learning, memory and anxiety. Capable of binding RNA. In Mus musculus (Mouse), this protein is KH domain-containing protein 3.